A 182-amino-acid polypeptide reads, in one-letter code: Putative CTD phosphatase-like protein 355R (182 aa).

The FCP1 homology domain occupies 1–180 (MKNIFLDLDN…MRLKDVLNRH (180 aa)).

Belongs to the IIV-6 355R family.

May function as a phosphatase. The chain is Putative CTD phosphatase-like protein 355R from Invertebrate iridescent virus 6 (IIV-6).